The primary structure comprises 693 residues: Elongation factor G (693 aa).

The region spanning 6–286 (KYTRNIGIAA…AICRYLPSPI (281 aa)) is the tr-type G domain. Residues 15–22 (AHIDAGKT), 83–87 (DTPGH), and 137–140 (NKMD) each bind GTP.

The protein belongs to the TRAFAC class translation factor GTPase superfamily. Classic translation factor GTPase family. EF-G/EF-2 subfamily.

It localises to the cytoplasm. In terms of biological role, catalyzes the GTP-dependent ribosomal translocation step during translation elongation. During this step, the ribosome changes from the pre-translocational (PRE) to the post-translocational (POST) state as the newly formed A-site-bound peptidyl-tRNA and P-site-bound deacylated tRNA move to the P and E sites, respectively. Catalyzes the coordinated movement of the two tRNA molecules, the mRNA and conformational changes in the ribosome. The sequence is that of Elongation factor G from Karelsulcia muelleri (strain GWSS) (Sulcia muelleri).